Here is a 513-residue protein sequence, read N- to C-terminus: 2-isopropylmalate synthase (513 aa).

The region spanning 5–268 (LIIFDTTLRD…DVGVDTSQIV (264 aa)) is the Pyruvate carboxyltransferase domain. Residues Asp-14, His-202, His-204, and Asn-239 each contribute to the Mn(2+) site. The regulatory domain stretch occupies residues 394 to 513 (RFISLSQRSE…KAVQKINPQI (120 aa)).

Belongs to the alpha-IPM synthase/homocitrate synthase family. LeuA type 1 subfamily. As to quaternary structure, homodimer. It depends on Mn(2+) as a cofactor.

It is found in the cytoplasm. It catalyses the reaction 3-methyl-2-oxobutanoate + acetyl-CoA + H2O = (2S)-2-isopropylmalate + CoA + H(+). It functions in the pathway amino-acid biosynthesis; L-leucine biosynthesis; L-leucine from 3-methyl-2-oxobutanoate: step 1/4. Functionally, catalyzes the condensation of the acetyl group of acetyl-CoA with 3-methyl-2-oxobutanoate (2-ketoisovalerate) to form 3-carboxy-3-hydroxy-4-methylpentanoate (2-isopropylmalate). This Cupriavidus pinatubonensis (strain JMP 134 / LMG 1197) (Cupriavidus necator (strain JMP 134)) protein is 2-isopropylmalate synthase.